The primary structure comprises 182 residues: ATP-dependent protease subunit HslV (182 aa).

Threonine 12 is a catalytic residue. Positions 167, 170, and 173 each coordinate Na(+).

This sequence belongs to the peptidase T1B family. HslV subfamily. As to quaternary structure, a double ring-shaped homohexamer of HslV is capped on each side by a ring-shaped HslU homohexamer. The assembly of the HslU/HslV complex is dependent on binding of ATP.

It localises to the cytoplasm. It carries out the reaction ATP-dependent cleavage of peptide bonds with broad specificity.. With respect to regulation, allosterically activated by HslU binding. In terms of biological role, protease subunit of a proteasome-like degradation complex believed to be a general protein degrading machinery. This is ATP-dependent protease subunit HslV from Chlorobium phaeovibrioides (strain DSM 265 / 1930) (Prosthecochloris vibrioformis (strain DSM 265)).